Reading from the N-terminus, the 156-residue chain is MKKVTHIVEELVTPIVTHMGLELVDIEYVKEGKNWFLRVFIDSPTGIDIDQCGVVSEQLSEKLDEIDPIPHNYFLEVSSPGAERPLKKARDFERAVGKNVYVKTYEPIDGQKEFEGLLTAFDGQTVTVEVKVKTKKKTITIPYEKVASARLAVIFS.

Belongs to the RimP family.

It is found in the cytoplasm. Required for maturation of 30S ribosomal subunits. The protein is Ribosome maturation factor RimP of Anoxybacillus flavithermus (strain DSM 21510 / WK1).